Here is a 360-residue protein sequence, read N- to C-terminus: Probable cinnamyl alcohol dehydrogenase 9 (360 aa).

A Zn(2+)-binding site is contributed by cysteine 50. An NADP(+)-binding site is contributed by threonine 52. The Zn(2+) site is built by histidine 72, glutamate 73, cysteine 103, cysteine 106, cysteine 109, cysteine 117, and cysteine 166. NADP(+) contacts are provided by residues threonine 170, 191 to 196, 214 to 219, threonine 254, glycine 278, and 301 to 303; these read GLGGLG, SSSSTK, and SDV.

It belongs to the zinc-containing alcohol dehydrogenase family. Homodimer. Zn(2+) is required as a cofactor. Expressed in the vasculature of the primary root and elongation regions. Expressed in the hypocotyl, cotyledon veins, vasculature of the first rosette leaves, and hydathodes. In stems, expressed in the vascular cambium, interfascicular cambium, developing xylem, and phloem. Expressed in the entire floral organs at late developing stage, and in the abscission, style and stigmatic regions of siliques and seed funicules.

It carries out the reaction (E)-cinnamyl alcohol + NADP(+) = (E)-cinnamaldehyde + NADPH + H(+). It functions in the pathway aromatic compound metabolism; phenylpropanoid biosynthesis. In terms of biological role, involved in lignin biosynthesis. May catalyze the final step specific for the production of lignin monomers, like coniferyl alcohol, sinapyl alcohol and 4-coumaryl alcohol. The polypeptide is Probable cinnamyl alcohol dehydrogenase 9 (CAD9) (Arabidopsis thaliana (Mouse-ear cress)).